The chain runs to 247 residues: Eukaryotic translation initiation factor 3 subunit J (247 aa).

2 disordered regions span residues Met-1 to Lys-64 and Glu-77 to Met-101. The span at Glu-24–Lys-45 shows a compositional bias: acidic residues. Residues Glu-43 to Gln-108 adopt a coiled-coil conformation.

Belongs to the eIF-3 subunit J family. Component of the eukaryotic translation initiation factor 3 (eIF-3) complex.

The protein resides in the cytoplasm. In terms of biological role, component of the eukaryotic translation initiation factor 3 (eIF-3) complex, which is involved in protein synthesis of a specialized repertoire of mRNAs and, together with other initiation factors, stimulates binding of mRNA and methionyl-tRNAi to the 40S ribosome. The eIF-3 complex specifically targets and initiates translation of a subset of mRNAs involved in cell proliferation. This is Eukaryotic translation initiation factor 3 subunit J from Nematostella vectensis (Starlet sea anemone).